Reading from the N-terminus, the 707-residue chain is Choline transporter-like protein 4 (707 aa).

Residues 1–32 (MGRKQNENEAHGNSAKYDPSFRGPIKNRGCTD) lie on the Cytoplasmic side of the membrane. The helical transmembrane segment at 33 to 53 (IICCVLFLIFILGYIIVGLVA) threads the bilayer. The Extracellular portion of the chain corresponds to 54–227 (WVYGDPRQVL…KIFEDFAQSW (174 aa)). N-linked (GlcNAc...) asparagine glycans are attached at residues N67, N185, N195, and N196. A helical transmembrane segment spans residues 228 to 248 (YWILVALGVALALSLLFILLL). Over 249-250 (RL) the chain is Cytoplasmic. The helical transmembrane segment at 251–271 (VAAPLVLLLIVGVLAVLAYGI) threads the bilayer. Topologically, residues 272–307 (YHCWQQYQVFRDKGASITQLGFTTNFSAYQSVKETW) are extracellular. An N-linked (GlcNAc...) asparagine glycan is attached at N296. Residues 308-328 (LAALIVLAVLEGILLLMLIFL) form a helical membrane-spanning segment. Residues 329–356 (RQRIRIAIALLKEASRAVGQMMSTMFYP) lie on the Cytoplasmic side of the membrane. Residues 357–377 (LVTFVLLVICIGYWAVTALYL) form a helical membrane-spanning segment. Topologically, residues 378 to 452 (ATSGQPQYIY…GVLGLFWTVN (75 aa)) are extracellular. N-linked (GlcNAc...) asparagine glycosylation is found at N391, N403, and N413. The helical transmembrane segment at 453–473 (WVLALGQCVLAGAFASFYWAF) threads the bilayer. Over 474 to 498 (HKPRDIPTFPLSSAFIRTLRYHTGS) the chain is Cytoplasmic. A helical transmembrane segment spans residues 499–519 (LAFGALILSLVQIARVILEYI). Over 520 to 557 (DHKLRGSQNPVARCIICCFKCCLWCLEKFIKFLNRNAY) the chain is Extracellular. The helical transmembrane segment at 558–578 (IMIAIYGKNFCVSAKNAFMLL) threads the bilayer. Residues 579–594 (MRNVLRVVVLDKVTDL) lie on the Cytoplasmic side of the membrane. Residues 595–615 (LLFFGKLLVVGGVGVLSFFFF) traverse the membrane as a helical segment. At 616 to 635 (SGRIKGLGKDFENPNLNYYW) the chain is on the extracellular side. A helical membrane pass occupies residues 636 to 656 (LPIMTSIMGAYVIASGFFSVF). Over 657 to 707 (GMCVDTLFLCFLEDLERNDGSQERPYYMPKALLKILGKKNEAPTGGKTRKK) the chain is Cytoplasmic.

Belongs to the CTL (choline transporter-like) family. Post-translationally, N-glycosylated; N-glycosylation of Asn-67 and Asn-391 is required for a proper thiamine pyrophosphate uptake. As to expression, expressed in colon and cecum.

Its subcellular location is the membrane. It is found in the apical cell membrane. It carries out the reaction choline(out) + n H(+)(in) = choline(in) + n H(+)(out). It catalyses the reaction thiamine diphosphate(out) = thiamine diphosphate(in). Its function is as follows. Choline transporter that plays a role in the choline-acetylcholine system and is required to the efferent innervation of hair cells in the olivocochlear bundle for the maintenance of physiological function of outer hair cells and the protection of hair cells from acoustic injury. Also described as a thiamine pyrophosphate transporter in colon, may mediate the absorption of microbiota-generated thiamine pyrophosphate and contribute to host thiamine (vitamin B1) homeostasis. This chain is Choline transporter-like protein 4, found in Mus musculus (Mouse).